A 594-amino-acid chain; its full sequence is Adenine deaminase 1 (594 aa).

The protein belongs to the metallo-dependent hydrolases superfamily. Adenine deaminase family. Requires Mn(2+) as cofactor.

It catalyses the reaction adenine + H2O + H(+) = hypoxanthine + NH4(+). The sequence is that of Adenine deaminase 1 from Jannaschia sp. (strain CCS1).